Consider the following 428-residue polypeptide: E3 ubiquitin-protein ligase RNF128 (428 aa).

Positions 1–38 (MGPPLGAGVSCRGGCGSSRLLAWCFLLALSPQAPGSRG) are cleaved as a signal peptide. 3 N-linked (GlcNAc...) asparagine glycosylation sites follow: N48, N59, and N101. One can recognise a PA domain in the interval 75 to 183 (SPLEPVAGVL…LKGTKILQSI (109 aa)). A helical transmembrane segment spans residues 208–228 (IFFVSVSFFIITAATVGYFIF). Residues 277–318 (CAVCIELYKPNDLVRILTCNHIFHKTCVDPWLLEHRTCPMCK) form an RING-type; atypical zinc finger. The interval 346 to 428 (ISNSASSHEE…QETAVREIKS (83 aa)) is disordered. Positions 416–428 (TPHQETAVREIKS) are enriched in basic and acidic residues.

Post-translationally, auto-ubiquitinated. Controls the development of T-cell clonal anergy by ubiquitination.

It localises to the cytoplasm. The protein localises to the endomembrane system. Its subcellular location is the cytoskeleton. It is found in the perinuclear region. The enzyme catalyses S-ubiquitinyl-[E2 ubiquitin-conjugating enzyme]-L-cysteine + [acceptor protein]-L-lysine = [E2 ubiquitin-conjugating enzyme]-L-cysteine + N(6)-ubiquitinyl-[acceptor protein]-L-lysine.. It functions in the pathway protein modification; protein ubiquitination. In terms of biological role, E3 ubiquitin-protein ligase that catalyzes 'Lys-27', 'Lys-48'- or 'Lys-63'-linked polyubiquitin chains formation and plays a role in different biological processes such as modulation of immune response, cytoskeletal dynamics or protein homeostasis. Inhibits IL2 and IL4 transcription, thereby playing an important role in the induction of the anergic phenotype, a long-term stable state of T-lymphocyte unresponsiveness to antigenic stimulation associated with the blockade of interleukin production. Ubiquitinates ARPC5 with 'Lys-48' linkages and COR1A with 'Lys-63' linkages leading to their degradation, down-regulation of these cytoskeletal components results in impaired lamellipodium formation and reduced accumulation of F-actin at the immunological synapse. Functions in the patterning of the dorsal ectoderm; sensitizes ectoderm to respond to neural-inducing signals. Plays a positive role in innate immune response by promoting 'Lys-63'-linked ubiquitination of TBK1 after RNA- or DNA-virus infection. Regulates alveolar macrophage activation and neutrophil infiltration by interacting with TLR4, targeting it for degradation, and inhibiting NF-kappa-B activation, hence decreasing pro-inflammatory cytokines. Negatively regulates the IL-3/STAT5 signaling pathway by facilitating 'Lys-27'-linked polyubiquitination of IL3RA leading to its degradation via lysosomal pathway. Directly regulates the N-glycosylation process in the endoplasmic reticulum by targeting the glycosyl-transferase RPN1 for ubiquitination and degradation. Other substrates targeted for degradation by RNF128 include transmembrane proteins CD40L, CD83 or the tetraspanin CD151. The protein is E3 ubiquitin-protein ligase RNF128 (RNF128) of Pongo abelii (Sumatran orangutan).